A 205-amino-acid chain; its full sequence is Small ribosomal subunit protein uS4 (205 aa).

The region spanning Arg-103 to Ala-173 is the S4 RNA-binding domain. Positions Ala-174–Gln-205 are disordered. Over residues Ala-179–Gln-205 the composition is skewed to low complexity.

The protein belongs to the universal ribosomal protein uS4 family. In terms of assembly, part of the 30S ribosomal subunit. Contacts protein S5. The interaction surface between S4 and S5 is involved in control of translational fidelity.

Its function is as follows. One of the primary rRNA binding proteins, it binds directly to 16S rRNA where it nucleates assembly of the body of the 30S subunit. With S5 and S12 plays an important role in translational accuracy. The polypeptide is Small ribosomal subunit protein uS4 (Cenarchaeum symbiosum (strain A)).